The following is a 451-amino-acid chain: Midnolin-B (451 aa).

The region spanning 20–94 (MNLNIQSTTG…LTLLPSVEAG (75 aa)) is the Ubiquitin-like domain. Disordered stretches follow at residues 187–254 (ASCT…RSRK), 331–372 (RNAK…QTEN), and 388–427 (QKRL…EGSL). Composition is skewed to low complexity over residues 190-205 (TPGS…TSST), 237-250 (STRG…SPSS), and 336-347 (TSPQSTGPQQTT). The span at 363–372 (SGDRLRQTEN) shows a compositional bias: basic and acidic residues. Basic residues predominate over residues 388–397 (QKRLRRKARR). Low complexity predominate over residues 413–426 (RTSSNSSTSSGEGS).

It localises to the nucleus. It is found in the cytoplasm. The protein resides in the cytosol. Its subcellular location is the nucleolus. Its function is as follows. Facilitates ubiquitin-independent proteasomal degradation of polycomb protein CBX4. Plays a role in inhibiting the activity of glucokinase GCK and both glucose-induced and basal insulin secretion. In Xenopus laevis (African clawed frog), this protein is Midnolin-B (midn-b).